Here is a 184-residue protein sequence, read N- to C-terminus: MHPPVPSLTDTTLVADLNARLRDVPDFPKPGIVFKDITPVLADPRLFGRVIDAMSAPFRGQHVTKVVGVEARGFLLGAPIALALNAGFVPARKPGKLPHRSVVERYSLEYGSDGVEMHEDAILQGERVLVVDDVLATGGTAEATARLVSRLGGELVGFCFLLSLDFLEGPNRLGRERVTTLLTF.

Belongs to the purine/pyrimidine phosphoribosyltransferase family. As to quaternary structure, homodimer.

The protein localises to the cytoplasm. The enzyme catalyses AMP + diphosphate = 5-phospho-alpha-D-ribose 1-diphosphate + adenine. Its pathway is purine metabolism; AMP biosynthesis via salvage pathway; AMP from adenine: step 1/1. In terms of biological role, catalyzes a salvage reaction resulting in the formation of AMP, that is energically less costly than de novo synthesis. The sequence is that of Adenine phosphoribosyltransferase from Myxococcus xanthus (strain DK1622).